The chain runs to 218 residues: Ribose-5-phosphate isomerase A (218 aa).

Substrate-binding positions include 28 to 31, 81 to 84, and 94 to 97; these read TGST, DGAD, and KGGG. The Proton acceptor role is filled by glutamate 103. A substrate-binding site is contributed by lysine 121.

It belongs to the ribose 5-phosphate isomerase family. As to quaternary structure, homodimer.

The enzyme catalyses aldehydo-D-ribose 5-phosphate = D-ribulose 5-phosphate. The protein operates within carbohydrate degradation; pentose phosphate pathway; D-ribose 5-phosphate from D-ribulose 5-phosphate (non-oxidative stage): step 1/1. Catalyzes the reversible conversion of ribose-5-phosphate to ribulose 5-phosphate. This Yersinia pseudotuberculosis serotype IB (strain PB1/+) protein is Ribose-5-phosphate isomerase A.